An 840-amino-acid chain; its full sequence is MGLFDKIFGSYSDREVKRITPIVDKIDSLGPEMEKLSDEELKQKTFEFKDRYAKGESLDDMLPEAFAVCREASTRVLGMKHYREQLIGGIVLHQGRIAEMKTGEGKTLVATLPVYLNAIAGKGVHVITVNDYLATRDKEWMGQLYEFLGLTTGVIVHGLTNDQRREAYNADITYGTNNEFGFDYLRDNMVIYKEERVQRPLHYCIVDEVDSILIDEARTPLIISGAGSKSTDLYKIADFFVKKLREEEDYTIDEKAHAAMLTDKGVAEAEKAFGIENYADANNMELQHHITQALKANYVMKRDKDYMVKDDEIAIVDEFTGRLMEGRRYSDGLHQAIEAKEGVKVQRESKTLATITFQNYFRMYTKLAGMTGTALTEETEFREIYGLDVVVIPTHRPVQRQDHSDLVFKTAKGKYDAIVEEIIETHKTGQPVLVGTTSIEKSEYLSSLLKKKGVPHKVLNARYHEQEAEIVSHAGELGNITIATNMAGRGTDIKLGEGVLEVGGLKIIGTERHESRRIDNQLRGRSGRQGDKGHSRFYISLEDDLMRIFGSEKLQAVVDRLGLEETEAIESKMVTKSIENAQKKVEGNNFDIRKTLLGYDDVMNKQREVIYKQRSQVLEGENLEDSVQAMIEDVITNAVQAHLGNIDEDDFEKELGDLIKYLEDIMLPHGKFTVEELKTNSNEEITRKFIECAREIYKEKEEFVGSEQMREIERVIILRVVDTKWMDHIDDMDHLKQGIGLRAYKQQDPIQAYQMEGSAMFDEMINNIKIDTVRYLFHVKVEAEKPQRERVAKETGASHGGDSQEIKKKPVKKEPKVGRNDLCPCGSGKKYKSCCGREVV.

Residues Gln-85, 103 to 107 (GEGKT), and Asp-492 contribute to the ATP site. Residues 787-821 (QRERVAKETGASHGGDSQEIKKKPVKKEPKVGRND) are disordered. Over residues 802–819 (DSQEIKKKPVKKEPKVGR) the composition is skewed to basic and acidic residues. Positions 823, 825, 834, and 835 each coordinate Zn(2+).

It belongs to the SecA family. Monomer and homodimer. Part of the essential Sec protein translocation apparatus which comprises SecA, SecYEG and auxiliary proteins SecDF. Other proteins may also be involved. It depends on Zn(2+) as a cofactor.

Its subcellular location is the cell membrane. The protein localises to the cytoplasm. It catalyses the reaction ATP + H2O + cellular proteinSide 1 = ADP + phosphate + cellular proteinSide 2.. In terms of biological role, part of the Sec protein translocase complex. Interacts with the SecYEG preprotein conducting channel. Has a central role in coupling the hydrolysis of ATP to the transfer of proteins into and across the cell membrane, serving as an ATP-driven molecular motor driving the stepwise translocation of polypeptide chains across the membrane. The chain is Protein translocase subunit SecA from Clostridium perfringens (strain SM101 / Type A).